A 1020-amino-acid chain; its full sequence is Valine--tRNA ligase (1020 aa).

Residues 45-55 (PNVTGALHVGH) carry the 'HIGH' region motif. Residues 661–665 (KMSKT) carry the 'KMSKS' region motif. Lys664 provides a ligand contact to ATP. Residues 955–1020 (AEKDRLEKAK…EALARLAELG (66 aa)) are a coiled coil.

The protein belongs to the class-I aminoacyl-tRNA synthetase family. ValS type 1 subfamily. Monomer.

It is found in the cytoplasm. The enzyme catalyses tRNA(Val) + L-valine + ATP = L-valyl-tRNA(Val) + AMP + diphosphate. Its function is as follows. Catalyzes the attachment of valine to tRNA(Val). As ValRS can inadvertently accommodate and process structurally similar amino acids such as threonine, to avoid such errors, it has a 'posttransfer' editing activity that hydrolyzes mischarged Thr-tRNA(Val) in a tRNA-dependent manner. This chain is Valine--tRNA ligase, found in Ruegeria pomeroyi (strain ATCC 700808 / DSM 15171 / DSS-3) (Silicibacter pomeroyi).